The sequence spans 493 residues: Chromosomal replication initiator protein DnaA (493 aa).

Residues 1 to 105 form a domain I, interacts with DnaA modulators region; sequence MSDTIQQEAP…LMYSIVIDKS (105 aa). The interval 105–152 is domain II; sequence SQGQPVTIELPHQIDAAPAERSVRPEAPGQKASAERERLEIARPRFES. Residues 121 to 140 form a disordered region; sequence APAERSVRPEAPGQKASAER. The domain III, AAA+ region stretch occupies residues 153 to 370; sequence NLNPKYTFST…GCIVKLLAAH (218 aa). ATP contacts are provided by G198, G200, K201, and T202. The interval 371–493 is domain IV, binds dsDNA; sequence SLDNQEIDLQ…LRKRIEIMSM (123 aa).

The protein belongs to the DnaA family. Oligomerizes as a right-handed, spiral filament on DNA at oriC.

The protein resides in the cytoplasm. Plays an essential role in the initiation and regulation of chromosomal replication. ATP-DnaA binds to the origin of replication (oriC) to initiate formation of the DNA replication initiation complex once per cell cycle. Binds the DnaA box (a 9 base pair repeat at the origin) and separates the double-stranded (ds)DNA. Forms a right-handed helical filament on oriC DNA; dsDNA binds to the exterior of the filament while single-stranded (ss)DNA is stabiized in the filament's interior. The ATP-DnaA-oriC complex binds and stabilizes one strand of the AT-rich DNA unwinding element (DUE), permitting loading of DNA polymerase. After initiation quickly degrades to an ADP-DnaA complex that is not apt for DNA replication. Binds acidic phospholipids. The protein is Chromosomal replication initiator protein DnaA of Chlorobaculum tepidum (strain ATCC 49652 / DSM 12025 / NBRC 103806 / TLS) (Chlorobium tepidum).